A 278-amino-acid polypeptide reads, in one-letter code: 3-methyl-2-oxobutanoate hydroxymethyltransferase (278 aa).

Residues aspartate 43 and aspartate 82 each contribute to the Mg(2+) site. 3-methyl-2-oxobutanoate-binding positions include 43-44 (DS), aspartate 82, and lysine 112. Glutamate 114 serves as a coordination point for Mg(2+). The active-site Proton acceptor is glutamate 181.

The protein belongs to the PanB family. In terms of assembly, homodecamer; pentamer of dimers. Requires Mg(2+) as cofactor.

The protein localises to the cytoplasm. It carries out the reaction 3-methyl-2-oxobutanoate + (6R)-5,10-methylene-5,6,7,8-tetrahydrofolate + H2O = 2-dehydropantoate + (6S)-5,6,7,8-tetrahydrofolate. The protein operates within cofactor biosynthesis; (R)-pantothenate biosynthesis; (R)-pantoate from 3-methyl-2-oxobutanoate: step 1/2. Its function is as follows. Catalyzes the reversible reaction in which hydroxymethyl group from 5,10-methylenetetrahydrofolate is transferred onto alpha-ketoisovalerate to form ketopantoate. This chain is 3-methyl-2-oxobutanoate hydroxymethyltransferase, found in Bacillus cereus (strain AH187).